The primary structure comprises 2261 residues: Phospholipid-transporting ATPase ABCA1 (2261 aa).

Residue cysteine 3 is the site of S-palmitoyl cysteine attachment. N-linked (GlcNAc...) asparagine glycosylation occurs at asparagine 14. A helical transmembrane segment spans residues 22-42 (TCQLLLEVAWPLFIFLILISV). Cysteine 23 carries S-palmitoyl cysteine lipidation. Residues 43–639 (RLSYPPYEQH…DIFLRVMSRS (597 aa)) lie on the Extracellular side of the membrane. Residues 69–80 (WVQGIICNANNP) form an annulus domain 1 region. Cysteine 75 and cysteine 309 are disulfide-bonded. N-linked (GlcNAc...) asparagine glycosylation is found at asparagine 98, asparagine 151, asparagine 161, asparagine 196, asparagine 244, asparagine 292, asparagine 337, and asparagine 349. An annulus domain 2 region spans residues 368–379 (SRIIWKALKPLL). N-linked (GlcNAc...) asparagine glycans are attached at residues asparagine 400, asparagine 478, asparagine 489, and asparagine 521. The tract at residues 564–594 (ERTNKIKDGYWDPGPRADPFEDMRYVWGGFA) is gateway domain. The next 5 membrane-spanning stretches (helical) occupy residues 640 to 660 (MPLF…KGIV), 683 to 703 (FSWF…LVVI), 716 to 736 (SVVF…CFLI), 745 to 765 (LAAA…VLCV), and 777 to 797 (IFAS…FALF). Asparagine 820 is a glycosylation site (N-linked (GlcNAc...) asparagine). Residues 827–847 (MMLFDTFLYGVMTWYIEAVFP) form a helical membrane-spanning segment. The region spanning 899 to 1131 (VSIQNLVKVY…LGTGYYLTLV (233 aa)) is the ABC transporter 1 domain. 933–940 (GHNGAGKT) contacts ATP. The chain crosses the membrane as a helical span at residues 1041-1057 (LSVALAFVGGSKVVILD). Position 1042 is a phosphoserine; by PKA (serine 1042). Residues cysteine 1110 and cysteine 1111 are each lipidated (S-palmitoyl cysteine). Asparagine 1144 and asparagine 1294 each carry an N-linked (GlcNAc...) asparagine glycan. The disordered stretch occupies residues 1283 to 1312 (RPFTEDDAADPNDSDIDPESRETDLLSGMD). Residues 1287-1299 (EDDAADPNDSDID) show a composition bias toward acidic residues. Position 1296 is a phosphoserine (serine 1296). Residues 1351–1371 (IVLPAVFVCIALVFSLIVPPF) form a helical membrane-spanning segment. Topologically, residues 1372–1656 (GKYPSLELQP…ALMTTSVDVL (285 aa)) are extracellular. N-linked (GlcNAc...) asparagine glycosylation is present at asparagine 1453. A disulfide bridge connects residues cysteine 1463 and cysteine 1477. 2 N-linked (GlcNAc...) asparagine glycosylation sites follow: asparagine 1504 and asparagine 1637. The next 6 membrane-spanning stretches (helical) occupy residues 1657–1677 (VSIC…VFLI), 1703–1723 (FVWD…IFIC), 1735–1755 (LPVL…LMYP), 1768–1788 (VVLT…TFVL), 1802–1822 (ILKS…LIDM), and 1852–1872 (NLFA…LIQY). One can recognise an ABC transporter 2 domain in the interval 1912–2144 (LEIKELTKIY…FGDGYTIVVR (233 aa)). Residue 1946–1953 (GVNGAGKS) participates in ATP binding. Asparagine 2044 is a glycosylation site (N-linked (GlcNAc...) asparagine). Serine 2054 carries the post-translational modification Phosphoserine; by PKA. Asparagine 2238 carries N-linked (GlcNAc...) asparagine glycosylation.

This sequence belongs to the ABC transporter superfamily. ABCA family. In terms of assembly, interacts with MEGF10. May interact with APOE1; functionally associated with APOE1 in the biogenesis of HDLs. Interacts with ABCA8; this interaction potentiates cholesterol efflux. Interacts with ABCA12 and NR1H2; this interaction is required for ABCA1 localization to the cell surface and is necessary for its normal activity and stability. In terms of processing, phosphorylation on Ser-2054 regulates phospholipid efflux. Post-translationally, palmitoylated by ZDHHC8. Palmitoylation is essential for localization to the plasma membrane. Widely expressed, but most abundant in macrophages.

The protein localises to the cell membrane. It localises to the endosome. The enzyme catalyses ATP + H2O + phospholipidSide 1 = ADP + phosphate + phospholipidSide 2.. The catalysed reaction is a 1,2-diacyl-sn-glycero-3-phosphocholine(out) + ATP + H2O = a 1,2-diacyl-sn-glycero-3-phosphocholine(in) + ADP + phosphate + H(+). It catalyses the reaction a 1,2-diacyl-sn-glycero-3-phospho-L-serine(out) + ATP + H2O = a 1,2-diacyl-sn-glycero-3-phospho-L-serine(in) + ADP + phosphate + H(+). It carries out the reaction a sphingomyelin(in) + ATP + H2O = a sphingomyelin(out) + ADP + phosphate + H(+). The enzyme catalyses cholesterol(in) + ATP + H2O = cholesterol(out) + ADP + phosphate + H(+). ATPase activity is decreased by cholesterol and ceramide. ATPase activity is stimulated by phosphatidylcholine and to a lesser degree by phosphatidylserine and sphingomyelin. Phospholipid translocase activity is highly reduced by berylium fluoride and aluminum flouride and reduced by N-ethylmaleimide. Its function is as follows. Catalyzes the translocation of specific phospholipids from the cytoplasmic to the extracellular/lumenal leaflet of membrane coupled to the hydrolysis of ATP. Thereby, participates in phospholipid transfer to apolipoproteins to form nascent high density lipoproteins/HDLs. Transports preferentially phosphatidylcholine over phosphatidylserine. May play a similar role in the efflux of intracellular cholesterol to apolipoproteins and the formation of nascent high density lipoproteins/HDLs. Translocates phospholipids from the outer face of the plasma membrane and forces it through its gateway and annulus into an elongated hydrophobic tunnel in its extracellular domain. This is Phospholipid-transporting ATPase ABCA1 from Homo sapiens (Human).